The primary structure comprises 271 residues: Vacuolar arginine/histidine antiporter stm1 (271 aa).

Residues 14–80 (LTELSSFLGA…GNVSSTVLVL (67 aa)) enclose the PQ-loop 1 domain. 3 helical membrane-spanning segments follow: residues 17–37 (LSSFLGALSLGCWVVLLIPQL), 49–69 (ISDLFLIIWLIGDFFNVLGSI), and 77–97 (VLVLSFYYIVSDSTLLMQIYY). Position 119 is a phosphoserine (S119). A run of 4 helical transmembrane segments spans residues 144-164 (FGVMGCVVIVSTIVGNLIISS), 178-198 (PFTAGCISSVLYFCARIPQII), 211-231 (IIFFVLASVGNTSYAFSILVF), and 245-265 (PWILGAFSTIFLDIYIFYQFI). Positions 185 to 239 (SSVLYFCARIPQIIKNHKAKSTEGLSIIFFVLASVGNTSYAFSILVFPASDYLNY) constitute a PQ-loop 2 domain.

It belongs to the laat-1 family.

It localises to the vacuole membrane. The catalysed reaction is L-histidine(out) + L-arginine(in) = L-histidine(in) + L-arginine(out). Amino acid transporter that moves basic amino acids across the vacuolar membrane. Appears to function as an arginine/histidine antiporter. The sequence is that of Vacuolar arginine/histidine antiporter stm1 (stm1) from Schizosaccharomyces pombe (strain 972 / ATCC 24843) (Fission yeast).